The chain runs to 290 residues: Ribosomal RNA small subunit methyltransferase H (290 aa).

S-adenosyl-L-methionine is bound by residues G35–H37, D54, F81, D97, and Q104.

Belongs to the methyltransferase superfamily. RsmH family.

It localises to the cytoplasm. It carries out the reaction cytidine(1402) in 16S rRNA + S-adenosyl-L-methionine = N(4)-methylcytidine(1402) in 16S rRNA + S-adenosyl-L-homocysteine + H(+). Its function is as follows. Specifically methylates the N4 position of cytidine in position 1402 (C1402) of 16S rRNA. This is Ribosomal RNA small subunit methyltransferase H from Picosynechococcus sp. (strain ATCC 27264 / PCC 7002 / PR-6) (Agmenellum quadruplicatum).